We begin with the raw amino-acid sequence, 250 residues long: uncharacterized protein (250 aa).

The tract at residues 182–205 (HTPIVSIQTPPPPAPTPNRPDVPA) is disordered. Over residues 190 to 201 (TPPPPAPTPNRP) the composition is skewed to pro residues. Residues 230 to 250 (TRISVIPLLSVLLLVIIIILL) traverse the membrane as a helical segment.

It belongs to the ascovirus HvAV ORF18 family.

Its subcellular location is the membrane. This is an uncharacterized protein from Spodoptera frugiperda ascovirus 1a (SfAV-1a).